We begin with the raw amino-acid sequence, 617 residues long: Secretogranin-2 (617 aa).

The N-terminal stretch at 1–27 (MAEAKTHWLGAALSLIPLIFLISGAEA) is a signal peptide. The propeptide occupies 28 to 30 (ASF). Residues 123–147 (NEPQSVPKENKPHALNSEKNFPIDM) are disordered. Position 151 is a sulfotyrosine (tyrosine 151). Phosphoserine is present on residues serine 174, serine 268, serine 432, serine 532, serine 555, and serine 556. Residues 552-583 (NQGSSQETDKLAPVSKRFPVGPPKNDDTPNRQ) are disordered.

This sequence belongs to the chromogranin/secretogranin protein family. Interacts with Secretogranin III/SCG3.

It is found in the secreted. Functionally, neuroendocrine protein of the granin family that regulates the biogenesis of secretory granules. The chain is Secretogranin-2 (SCG2) from Macaca fascicularis (Crab-eating macaque).